The chain runs to 272 residues: NADPH-dependent aldehyde reductase 2, chloroplastic (272 aa).

The transit peptide at 1-53 (MAAASSVSSPPLCLAGRVAIVTGSSRGIGRAIAIHLAELGARVVVNYSTSPVE) directs the protein to the chloroplast. Position 26 to 50 (26 to 50 (RGIGRAIAIHLAELGARVVVNYSTS)) interacts with NADP(+). Ser-165 contacts substrate. The active-site Proton acceptor is the Tyr-179.

Belongs to the short-chain dehydrogenases/reductases (SDR) family.

It is found in the plastid. It localises to the chloroplast. Its function is as follows. Aldehyde reductase that catalyzes the reduction of the aldehyde carbonyl groups on saturated and alpha,beta-unsaturated aldehydes with more than 5 carbons. No activity on alpha,beta-unsaturated ketones. Can use propionaldehyde, butyraldehyde, methylglyoxal, (e)-2-pentenal, (E)-2-hexenal, (Z)-3-hexenal and (E)-2-nonenal as substrates, but not propenal (acrolein), crotonaldehyde, 2-butanone, 3-buten-2-one or 1-penten-3-one. This is NADPH-dependent aldehyde reductase 2, chloroplastic from Arabidopsis thaliana (Mouse-ear cress).